Consider the following 749-residue polypeptide: Probable galactinol--sucrose galactosyltransferase 6 (749 aa).

Belongs to the glycosyl hydrolases 36 family.

It catalyses the reaction alpha-D-galactosyl-(1-&gt;3)-1D-myo-inositol + sucrose = raffinose + myo-inositol. Transglycosidase operating by a ping-pong reaction mechanism. Involved in the synthesis of raffinose, a major soluble carbohydrate in seeds, roots and tubers. The protein is Probable galactinol--sucrose galactosyltransferase 6 (RFS6) of Arabidopsis thaliana (Mouse-ear cress).